The following is a 582-amino-acid chain: TBCC domain-containing protein 1 (582 aa).

Residues 140–153 show a composition bias toward low complexity; sequence EWPSPRSRSPSSSS. The segment at 140 to 159 is disordered; sequence EWPSPRSRSPSSSSSERDAK. In terms of domain architecture, C-CAP/cofactor C-like spans 305–451; the sequence is PPGSRLVLMS…LWNQPLLFGV (147 aa). Positions 547-558 are enriched in low complexity; it reads SLLPPTITPSSS. The disordered stretch occupies residues 547-582; it reads SLLPPTITPSSSAEHWSSNQNTLKEQTHEQPTGTVC. Polar residues predominate over residues 559 to 582; it reads AEHWSSNQNTLKEQTHEQPTGTVC.

It belongs to the TBCC family.

The protein resides in the cytoplasm. Its subcellular location is the cytoskeleton. It is found in the microtubule organizing center. The protein localises to the centrosome. It localises to the spindle pole. In terms of biological role, may play a role in the regulation of centrosome and Golgi apparatus positioning. This chain is TBCC domain-containing protein 1 (tbccd1), found in Danio rerio (Zebrafish).